The primary structure comprises 592 residues: uncharacterized protein (592 aa).

This is an uncharacterized protein from Saccharolobus solfataricus (strain ATCC 35092 / DSM 1617 / JCM 11322 / P2) (Sulfolobus solfataricus).